A 761-amino-acid chain; its full sequence is ARF GTPase-activating protein GIT1 (761 aa).

Residues 1–124 form the Arf-GAP domain; that stretch reads MSRKGPRAEV…AFVHKLPCRD (124 aa). The tract at residues 1–124 is interaction with gamma-tubulin and localization to the centrosome; it reads MSRKGPRAEV…AFVHKLPCRD (124 aa). The C4-type zinc-finger motif lies at 11 to 34; that stretch reads CADCSAPDPGWASISRGVLVCDEC. ANK repeat units lie at residues 132-161, 166-195, and 199-228; these read DLSKQLHSSVRTGNLETCLRLLSLGAQANF, KGTTPLHVAAKAGQTLQAELLVVYGADPGS, and NGRTPIDYARQAGHHELAERLVECQYELTD. A Phosphotyrosine modification is found at tyrosine 224. The interaction with PCLO stretch occupies residues 245–365; sequence HYIIPQMADS…QGKSLSSPTD (121 aa). Residues 253 to 415 are interaction with PTK2/FAK1; sequence DSLDLSELAK…NRARSMDSSD (163 aa). Residues 254 to 367 form an interaction with ARHGEF7 region; it reads SLDLSELAKA…KSLSSPTDNL (114 aa). The segment at 354–416 is disordered; that stretch reads RQQGKSLSSP…RARSMDSSDL (63 aa). Residues 357–374 are compositionally biased toward polar residues; the sequence is GKSLSSPTDNLELSLRSQ. A phosphoserine mark is found at serine 359 and serine 362. The residue at position 364 (threonine 364) is a Phosphothreonine. The interaction with NCK2 and GRIN3A stretch occupies residues 366–587; that stretch reads NLELSLRSQS…QEGSRHTSKL (222 aa). Residues 366 to 587 form a required for localization at synapses region; that stretch reads NLELSLRSQS…QEGSRHTSKL (222 aa). Phosphoserine occurs at positions 370 and 375. Phosphotyrosine is present on tyrosine 383. Phosphoserine is present on residues serine 385 and serine 388. Over residues 385-394 the composition is skewed to acidic residues; that stretch reads SVASDEDTDQ. Position 392 is a phosphothreonine (threonine 392). 3 positions are modified to phosphoserine: serine 410, serine 413, and serine 417. An interaction with MAPK1 region spans residues 411–466; the sequence is MDSSDLSDGAVTLQEYLELKKALATSEAKVQQLMKVNSSLSDELRRLQREIHKLQA. Residues 420-620 are interaction with IKBKG; it reads AVTLQEYLEL…EGKRFLELGK (201 aa). The stretch at 440–474 forms a coiled coil; the sequence is VQQLMKVNSSLSDELRRLQREIHKLQAENLQLRQP. A disordered region spans residues 471-501; sequence LRQPPGPVPTPPLPSERAEHTPMAPGGSTHR. A compositionally biased stretch (pro residues) spans 474–484; it reads PPGPVPTPPLP. A Phosphothreonine modification is found at threonine 480. Phosphoserine occurs at positions 498 and 536. A Phosphothreonine modification is found at threonine 537. Phosphotyrosine is present on residues tyrosine 545 and tyrosine 554. Residues serine 561, serine 571, serine 592, and serine 596 each carry the phosphoserine modification. A disordered region spans residues 572-606; the sequence is PLLSCSQEGSRHTSKLSRHGSGADSDYENTQSGDP. Threonine 601 bears the Phosphothreonine mark. Serine 630 is subject to Phosphoserine. Positions 637-761 are interaction with PXN and TGFB1I1; that stretch reads PGLPSTEDVI…VTITTREKKQ (125 aa).

Forms homodimers and possibly oligomers. May forms heterooligomers with GIT2. Interacts with G protein-coupled receptor kinases, including GRK2, GRK3, GRK5 and GRK6. Interacts with PPFIA1, PPFIA2 and PPFIA4. Interacts with GRIP1 and forms a ternary complex with PPFIA1 and GRIP1. Directly interacts with ARHGEF7/beta-PIX, forming in vitro a heptameric complex made of a GIT1 dimer and an ARHGEF7 trimer. Directly interacts with PXN/paxillin; this interaction is enhanced in the presence of ARHGEF7. Directly interacts (via C-terminus) with TGFB1I1/Hic-5 (via LD motif 3). Directly interacts with PTK2/FAK1. May interact with PTK2B/PYK2; this interaction may be indirect. Interacts with AMPA receptors GRIA2/3. Directly interacts with protein Piccolo/PCLO. Forms a complex with Ephrin-B1/EFNB1 and NCK2/GRB4 (via SH2); this interaction is important for spine morphogenesis and synapse formation. Interaction with NCK2 is transient and depends upon GIT1 phosphorylation at Tyr-383. Interacts with GRIN3A/GluN3A (via C-terminus); this interaction competes with GIT1 interaction with ARHGEF7 and limits synaptic localization of GIT1. Interacts with IKBKG/NEMO in resting bone mesenchymal stem cells, as well as in TNF-stimulated cells; this interaction may increase IKBKG affinity for 'Lys-63'-linked polyubiquitin chains. Interacts with GABA(A) receptors, including GABRB3 and GABRG2. Interacts with SCRIB. Interacts (via N- and C-terminus) with ENTR1/SDCCAG3 (via N-terminus); this interaction is direct. May form a tripartite complex with ENTR1 and PTPN13. Interacts with YWHAZ. Interacts with PAK1. Interacts with PAK3. Directly interacts (via N-terminus) with gamma-tubulin. Interacts with MAPK1 and MAPK3; this interaction is required for MAPK1/3 recruitment to focal adhesions. Phosphorylated by PAK1. Phosphorylation on tyrosine residues may be catalyzed by PTK2/FAK1 and SRC in growing fibroblasts. Phosphorylation at Tyr-383 is induced by activation of Ephrin-B1/EFNB1 and catalyzed by SRC family kinases. It is required for the interaction with NCK2 and for GIT1 recruitment to synapses in hippocampal neurons.

The protein resides in the cytoplasm. It localises to the synapse. It is found in the presynapse. Its subcellular location is the postsynapse. The protein localises to the postsynaptic density. The protein resides in the cell junction. It localises to the focal adhesion. It is found in the cell projection. Its subcellular location is the lamellipodium. The protein localises to the cytoskeleton. The protein resides in the microtubule organizing center. It localises to the centrosome. It is found in the spindle pole. Functionally, GTPase-activating protein for ADP ribosylation factor family members, including ARF1. Multidomain scaffold protein that interacts with numerous proteins and therefore participates in many cellular functions, including receptor internalization, focal adhesion remodeling, and signaling by both G protein-coupled receptors and tyrosine kinase receptors. Through PAK1 activation, positively regulates microtubule nucleation during interphase. Plays a role in the regulation of cytokinesis; for this function, may act in a pathway also involving ENTR1 and PTPN13. May promote cell motility both by regulating focal complex dynamics and by local activation of RAC1. May act as scaffold for MAPK1/3 signal transduction in focal adhesions. Recruits MAPK1/3/ERK1/2 to focal adhesions after EGF stimulation via a Src-dependent pathway, hence stimulating cell migration. Plays a role in brain development and function. Involved in the regulation of spine density and synaptic plasticity that is required for processes involved in learning. Plays an important role in dendritic spine morphogenesis and synapse formation. In hippocampal neurons, recruits guanine nucleotide exchange factors (GEFs), such as ARHGEF7/beta-PIX, to the synaptic membrane. These in turn locally activate RAC1, which is an essential step for spine morphogenesis and synapse formation. May contribute to the organization of presynaptic active zones through oligomerization and formation of a Piccolo/PCLO-based protein network, which includes ARHGEF7/beta-PIX and FAK1. In neurons, through its interaction with liprin-alpha family members, may be required for AMPA receptor (GRIA2/3) proper targeting to the cell membrane. In complex with GABA(A) receptors and ARHGEF7, plays a crucial role in regulating GABA(A) receptor synaptic stability, maintaining GPHN/gephyrin scaffolds and hence GABAergic inhibitory synaptic transmission, by locally coordinating RAC1 and PAK1 downstream effector activity, leading to F-actin stabilization. May also be important for RAC1 downstream signaling pathway through PAK3 and regulation of neuronal inhibitory transmission at presynaptic input. Required for successful bone regeneration during fracture healing. The function in intramembranous ossification may, at least partly, exerted by macrophages in which GIT1 is a key negative regulator of redox homeostasis, IL1B production, and glycolysis, acting through the ERK1/2/NRF2/NFE2L2 axis. May play a role in angiogenesis during fracture healing. In this process, may regulate activation of the canonical NF-kappa-B signal in bone mesenchymal stem cells by enhancing the interaction between NEMO and 'Lys-63'-ubiquitinated RIPK1/RIP1, eventually leading to enhanced production of VEGFA and others angiogenic factors. Essential for VEGF signaling through the activation of phospholipase C-gamma and ERK1/2, hence may control endothelial cell proliferation and angiogenesis. This chain is ARF GTPase-activating protein GIT1 (GIT1), found in Homo sapiens (Human).